A 112-amino-acid chain; its full sequence is cAMP-regulated phosphoprotein 19 (112 aa).

Positions 1 to 11 (MSAESPEPASA) are enriched in low complexity. A disordered region spans residues 1 to 48 (MSAESPEPASAEEQKEMEDKVISPEKAEEAKLKARYPHLGQKPGGSDF). Ser-2 carries the N-acetylserine modification. The segment covering 12-32 (EEQKEMEDKVISPEKAEEAKL) has biased composition (basic and acidic residues). Ser-62 and Ser-104 each carry phosphoserine; by GWL. Residues 73–112 (KNKQLPTAAPDKTEVTGDHIPTPQDLPQRKPSLVASKLAG) are disordered. Phosphoserine; by PKA is present on Ser-104.

It belongs to the endosulfine family. As to quaternary structure, interacts (when phosphorylated at Ser-62) with PPP2R2D. In terms of processing, phosphorylation at Ser-62 by MASTL/GWL during mitosis is essential for interaction with PPP2R2D (PR55-delta) and subsequent inactivation of PP2A.

It is found in the cytoplasm. In terms of biological role, protein phosphatase inhibitor that specifically inhibits protein phosphatase 2A (PP2A) during mitosis. Inhibition of PP2A is enhanced when ARPP19 is phosphorylated. When phosphorylated at Ser-62 during mitosis, specifically interacts with PPP2R2D (PR55-delta) and inhibits its activity, leading to inactivation of PP2A, an essential condition to keep cyclin-B1-CDK1 activity high during M phase. The polypeptide is cAMP-regulated phosphoprotein 19 (ARPP19) (Gallus gallus (Chicken)).